Reading from the N-terminus, the 1088-residue chain is MSQSNSHGQSNLAKFAFNIYGTLSTNSSTPQSHEISPSSSLSSSRSKKQTSQYNTQDTNNNRLSYYCDKEIISLSQLNCSLSIGGYSGDLQHHVVIGGKNYLRLLCVSESQQRIISGINLLESKSIYNSRAPNKLINVNTIKTFADTIATGLSNGVVSIYKISPNGQSKVTGKYSDHNRTINSLDFIESENQLLSGSQDGTIKLWDLRSSSTKPVMTVQANLHSDPIRACQYSPHSAVRNKICVLSVHDSGALCKFDLRTKSGGKVYSPEKKWNLHTGPALSLHIHPEKELVVTGGRDKRISIFNYGERQSRNTPQNLINTYGPVVKVRWSTYTNTEETAEEFEENKQAKPNTLYNYDIACSYLNDDPTITIYNLGRKFIPKQIIHSKKPIQNFIWARNETRSRKIWTISKSSTFSSYNLDRLEDSDVSRPIEDLNNIAMTWDNNNDFCAVSQARYDYDLETYENGINETTEENFDAERNYSLGNEELIHSQANSLTASPVDKPQLTRSLTFNPASSFSTFSPVLVARAATGFLQNDSATSSSSIPNMQVSSSRPKLTRNTSQTTQDSSSSQFASVLPPPSASQTYSSPQYKKNNPPRFMNNPAYVIPVSIPIPANDEYVFRKLSSESLVSTPDGFTLVDVCLLNASVAASVGNNRTSQIWRLLAVSIQEEFESGIEPRRIYAFQPEAINKLPQDVQETSTNANDTLHAETTNSNFVESFKSTSTSGSQFGKQSDKDERKLQSKNSSGNLMDMINKANRTNSFSATSFKFKEQERKEDESQKAQSIKDENERASIHSKSAPISISSHPEDLDDENMGSNNSAALKFSPPSVGVSIPSTRIISSSLASSPKSVRGPSGVKSHISRSRPSPPVQTWLKQKNLEVSNGSAMASTSGLSLTLKRNKTNEEGDQLTKAWKFKSLLRKSLDYATLQGDIIFCSTAALLFYDIVPEIISQFECLEWLGIYIEVLQRKRLFVNAINVIKCATADIQEKLQKLYCQDLSLRFYCSNCQALLVNEKSKFSGKGEFGYWYCDECSKLQSQCVYCNEPCKGLAVTVGLKCGHHGHFGCLKEWFIEDQNTECPGGCGYQII.

The disordered stretch occupies residues 26–56 (NSSTPQSHEISPSSSLSSSRSKKQTSQYNTQ). Low complexity predominate over residues 27-44 (SSTPQSHEISPSSSLSSS). WD repeat units lie at residues 131–170 (APNK…QSKV), 176–215 (DHNR…TKPV), 222–266 (LHSD…GGKV), 275–314 (LHTG…SRNT), 367–417 (DPTI…TFSS), 432–473 (IEDL…TTEE), and 502–546 (DKPQ…SSIP). Residues 537–560 (DSATSSSSIPNMQVSSSRPKLTRN) show a composition bias toward polar residues. The segment at 537 to 597 (DSATSSSSIP…SPQYKKNNPP (61 aa)) is disordered. The segment covering 561–572 (TSQTTQDSSSSQ) has biased composition (low complexity). The segment covering 582–593 (ASQTYSSPQYKK) has biased composition (polar residues). The stretch at 631 to 671 (STPDGFTLVDVCLLNASVAASVGNNRTSQIWRLLAVSIQEE) is one WD 8 repeat. Residues 709-732 (AETTNSNFVESFKSTSTSGSQFGK) show a composition bias toward polar residues. Disordered stretches follow at residues 709–751 (AETT…GNLM), 764–829 (SATS…FSPP), and 844–871 (SLAS…SPPV). Residues 769–794 (KFKEQERKEDESQKAQSIKDENERAS) are compositionally biased toward basic and acidic residues. Positions 796 to 806 (HSKSAPISISS) are enriched in polar residues. The RING-type; degenerate zinc-finger motif lies at 1040–1083 (CVYCNEPCKGLAVTVGLKCGHHGHFGCLKEWFIEDQNTECPGGC).

Belongs to the WD repeat RTC1 family.

The protein localises to the vacuole. In terms of biological role, may be involved in a process influencing telomere capping. The protein is Restriction of telomere capping protein 1 (RTC1) of Candida albicans (strain SC5314 / ATCC MYA-2876) (Yeast).